The following is a 907-amino-acid chain: MLGTIVKKIIGTKNDRELKRMAKLVDAINSHAEAMAQLTDGDLQHKTEAFRQAFKDGKTLDELLPEAFAVVREASTRVMGMRHFDVQMMGGISLHEGRISEMRTGEGKTLTATLPAYLNALSGEGVHVVTVNDYLAERDANWMRPLYEFLGLSVGIILSQQPTEHKRAAYAADITYGTNNEYGFDYLRDNMAFRLEDRVQRGLNYAIVDEVDSILIDEARTPLIISGPAADSSELYQAVNLLMPQLQKQEEEGEGDYFIDEKQRQVELTEAGHQKIEALLVNNQLLEQGESLYAAHNLALLHHVHAALKAHALFHIDRDYIVQDGQIVIVDEHTGRTMPGRRWSEGIHQAIEAKEGLNIQQENQTLASTTFQNYFRLYNKLSGMTGTADTEALEFRQIYGMDVVVVPTNKPMVRVDANDLVYLSLQEKFDAIVKEVTEAVAKGAPVLVGTATIEASEYLSKRLKQDKVHHEVLNAKFHQREAQIIAQAGRPGAVTIATNMAGRGTDIMLGGNPEEQIKHMETPSESEAEKIRAEWQANHDTVMKAGGLHIIGTERHESRRIDNQLRGRAGRQGDPGYTRFFLSMEDDLMRIFASDKIRNLMRSLGLENGEAIEHRWVTRAIENAQRKVEGRNFDIRKNLLEYDNVANDQRQVIYGQRDQILEAADLVNSVKGIRRDVITELVHDYMAPGSVEDQWDIPGLEKTLEAEFQCHAPVGQWLNEDNQLHIEGLIDKLVESMDEDYQRKEAEIGTEDLRKIEKHLMLQILDRHWKEHLANMDHLRQGIHLRGYAQKNPKQEYKKEAFELFQGLLNQIQHELIRVLHSLQVRRDDEVERLEQQREEEAREQAEKMKMQTVAEPGTDGSAQPQPSQQQGEQPKTMVRNGRKVGRNEPCPCGSGKKYKQCHGKIE.

Residues Gln87, 105–109 (GEGKT), and Asp506 each bind ATP. Basic and acidic residues predominate over residues 834–850 (LEQQREEEAREQAEKMK). The disordered stretch occupies residues 834–907 (LEQQREEEAR…KYKQCHGKIE (74 aa)). Positions 864-875 (QPQPSQQQGEQP) are enriched in low complexity. Residues Cys891, Cys893, Cys902, and His903 each coordinate Zn(2+). The segment covering 897 to 907 (KKYKQCHGKIE) has biased composition (basic residues).

Belongs to the SecA family. As to quaternary structure, monomer and homodimer. Part of the essential Sec protein translocation apparatus which comprises SecA, SecYEG and auxiliary proteins SecDF-YajC and YidC. Zn(2+) is required as a cofactor.

It localises to the cell inner membrane. The protein localises to the cytoplasm. It carries out the reaction ATP + H2O + cellular proteinSide 1 = ADP + phosphate + cellular proteinSide 2.. In terms of biological role, part of the Sec protein translocase complex. Interacts with the SecYEG preprotein conducting channel. Has a central role in coupling the hydrolysis of ATP to the transfer of proteins into and across the cell membrane, serving both as a receptor for the preprotein-SecB complex and as an ATP-driven molecular motor driving the stepwise translocation of polypeptide chains across the membrane. The chain is Protein translocase subunit SecA from Alcanivorax borkumensis (strain ATCC 700651 / DSM 11573 / NCIMB 13689 / SK2).